Consider the following 1014-residue polypeptide: UvrABC system protein A (1014 aa).

32–39 (GLSGSGKS) contributes to the ATP binding site. 2 ABC transporter domains span residues 314–592 (WSHG…AESQ) and 612–941 (QDPS…KFLR). 645-652 (GVSGSGKS) lines the ATP pocket. The segment at 744-770 (CENCAGDGTIKIEMNFLPDVYVPCEVC) adopts a C4-type zinc-finger fold. Residues 976–995 (TKTVTGTAAKKATATRTAKT) show a composition bias toward low complexity. The segment at 976 to 1014 (TKTVTGTAAKKATATRTAKTAVKKAAKPAAKKTTRTSKA) is disordered. Residues 996–1014 (AVKKAAKPAAKKTTRTSKA) show a composition bias toward basic residues.

The protein belongs to the ABC transporter superfamily. UvrA family. In terms of assembly, forms a heterotetramer with UvrB during the search for lesions.

It is found in the cytoplasm. The UvrABC repair system catalyzes the recognition and processing of DNA lesions. UvrA is an ATPase and a DNA-binding protein. A damage recognition complex composed of 2 UvrA and 2 UvrB subunits scans DNA for abnormalities. When the presence of a lesion has been verified by UvrB, the UvrA molecules dissociate. The protein is UvrABC system protein A of Streptomyces coelicolor (strain ATCC BAA-471 / A3(2) / M145).